The primary structure comprises 168 residues: Cytochrome c-type biogenesis protein CcmE (168 aa).

Topologically, residues Met-1–Arg-7 are cytoplasmic. Residues Leu-8–Ala-28 traverse the membrane as a helical; Signal-anchor for type II membrane protein segment. The Periplasmic portion of the chain corresponds to Phe-29–Pro-168. Positions 122 and 126 each coordinate heme. A disordered region spans residues Ser-149–Pro-168.

It belongs to the CcmE/CycJ family.

It localises to the cell inner membrane. Heme chaperone required for the biogenesis of c-type cytochromes. Transiently binds heme delivered by CcmC and transfers the heme to apo-cytochromes in a process facilitated by CcmF and CcmH. The protein is Cytochrome c-type biogenesis protein CcmE of Rhodospirillum centenum (strain ATCC 51521 / SW).